The following is a 425-amino-acid chain: Kynureninase (425 aa).

Pyridoxal 5'-phosphate-binding positions include Leu-105, Thr-106, 133–136, Asp-218, His-221, and Tyr-243; that span reads FPSD. Lys-244 carries the post-translational modification N6-(pyridoxal phosphate)lysine. 2 residues coordinate pyridoxal 5'-phosphate: Trp-274 and Asn-302.

The protein belongs to the kynureninase family. In terms of assembly, homodimer. It depends on pyridoxal 5'-phosphate as a cofactor.

The catalysed reaction is L-kynurenine + H2O = anthranilate + L-alanine + H(+). It catalyses the reaction 3-hydroxy-L-kynurenine + H2O = 3-hydroxyanthranilate + L-alanine + H(+). The protein operates within amino-acid degradation; L-kynurenine degradation; L-alanine and anthranilate from L-kynurenine: step 1/1. It functions in the pathway cofactor biosynthesis; NAD(+) biosynthesis; quinolinate from L-kynurenine: step 2/3. In terms of biological role, catalyzes the cleavage of L-kynurenine (L-Kyn) and L-3-hydroxykynurenine (L-3OHKyn) into anthranilic acid (AA) and 3-hydroxyanthranilic acid (3-OHAA), respectively. The chain is Kynureninase from Flavobacterium johnsoniae (strain ATCC 17061 / DSM 2064 / JCM 8514 / BCRC 14874 / CCUG 350202 / NBRC 14942 / NCIMB 11054 / UW101) (Cytophaga johnsonae).